The primary structure comprises 730 residues: Trimethylamine dehydrogenase (730 aa).

4 residues coordinate FMN: proline 29, cysteine 31, tyrosine 61, and glutamate 104. Position 31 is an S-6-FMN cysteine (cysteine 31). A substrate-binding site is contributed by 170–173 (YGAH). The Proton donor role is filled by tyrosine 175. FMN-binding residues include arginine 223, aspartate 268, arginine 300, alanine 322, and arginine 323. [4Fe-4S] cluster-binding residues include cysteine 346, cysteine 349, cysteine 352, and cysteine 365. The ADP site is built by serine 401, aspartate 420, threonine 421, histidine 428, methionine 471, and aspartate 675.

In the N-terminal section; belongs to the NADH:flavin oxidoreductase/NADH oxidase family. Homodimer. Forms a ternary complex with the heterodimeric electron transfer flavoprotein. It depends on FMN as a cofactor. [4Fe-4S] cluster is required as a cofactor.

It catalyses the reaction trimethylamine + oxidized [electron-transfer flavoprotein] + H2O + H(+) = dimethylamine + reduced [electron-transfer flavoprotein] + formaldehyde. The protein is Trimethylamine dehydrogenase of Methylophilus methylotrophus (Bacterium W3A1).